Consider the following 1041-residue polypeptide: Isoleucine--tRNA ligase (1041 aa).

Positions 53 to 63 (PFANGLPHYGH) match the 'HIGH' region motif. The 'KMSKS' region motif lies at 619–623 (KMSKS). Lys-622 is an ATP binding site.

This sequence belongs to the class-I aminoacyl-tRNA synthetase family. IleS type 2 subfamily. Monomer. Zn(2+) serves as cofactor.

It localises to the cytoplasm. It carries out the reaction tRNA(Ile) + L-isoleucine + ATP = L-isoleucyl-tRNA(Ile) + AMP + diphosphate. Catalyzes the attachment of isoleucine to tRNA(Ile). As IleRS can inadvertently accommodate and process structurally similar amino acids such as valine, to avoid such errors it has two additional distinct tRNA(Ile)-dependent editing activities. One activity is designated as 'pretransfer' editing and involves the hydrolysis of activated Val-AMP. The other activity is designated 'posttransfer' editing and involves deacylation of mischarged Val-tRNA(Ile). The polypeptide is Isoleucine--tRNA ligase (ileS) (Mycobacterium tuberculosis (strain CDC 1551 / Oshkosh)).